The following is a 210-amino-acid chain: HTH-type transcriptional repressor ComR (210 aa).

The HTH tetR-type domain maps to 18–78 (VFDRDAALDK…AVLDRYIDRF (61 aa)). Positions 41–60 (SLADLVEATGAKAPTLYAEF) form a DNA-binding region, H-T-H motif.

With respect to regulation, binding to the promoter region of BhsA/ComC is released in the presence of copper. Its function is as follows. Represses expression of BhsA/ComC by binding to its promoter region in the absence of copper. The protein is HTH-type transcriptional repressor ComR (comR) of Escherichia coli (strain K12).